The following is a 186-amino-acid chain: Adenine phosphoribosyltransferase (186 aa).

An AMP-binding site is contributed by 132 to 136; that stretch reads ATGGS.

This sequence belongs to the purine/pyrimidine phosphoribosyltransferase family. In terms of assembly, homodimer. Requires Mg(2+) as cofactor.

The protein resides in the cytoplasm. Its subcellular location is the nucleus. It carries out the reaction AMP + diphosphate = 5-phospho-alpha-D-ribose 1-diphosphate + adenine. It participates in purine metabolism; AMP biosynthesis via salvage pathway; AMP from adenine: step 1/1. Functionally, catalyzes a salvage reaction resulting in the formation of AMP, that is energically less costly than de novo synthesis. The chain is Adenine phosphoribosyltransferase (APT1) from Debaryomyces hansenii (strain ATCC 36239 / CBS 767 / BCRC 21394 / JCM 1990 / NBRC 0083 / IGC 2968) (Yeast).